Reading from the N-terminus, the 286-residue chain is 1D-myo-inositol 2-acetamido-2-deoxy-alpha-D-glucopyranoside deacetylase (286 aa).

Zn(2+) contacts are provided by histidine 12, aspartate 15, and histidine 147.

Belongs to the MshB deacetylase family. It depends on Zn(2+) as a cofactor.

It catalyses the reaction 1D-myo-inositol 2-acetamido-2-deoxy-alpha-D-glucopyranoside + H2O = 1D-myo-inositol 2-amino-2-deoxy-alpha-D-glucopyranoside + acetate. Catalyzes the deacetylation of 1D-myo-inositol 2-acetamido-2-deoxy-alpha-D-glucopyranoside (GlcNAc-Ins) in the mycothiol biosynthesis pathway. The chain is 1D-myo-inositol 2-acetamido-2-deoxy-alpha-D-glucopyranoside deacetylase from Thermobifida fusca (strain YX).